The primary structure comprises 635 residues: Very-long-chain aldehyde decarbonylase GL1-6 (635 aa).

The next 4 helical transmembrane spans lie at Leu-46 to Ile-66, Ile-100 to Ala-120, Gly-127 to His-147, and Val-183 to Ser-203. The Fatty acid hydroxylase domain maps to Val-139–Thr-273.

The protein belongs to the sterol desaturase family. In terms of assembly, homodimer. As to expression, expressed in germinating seeds and shoots.

The protein localises to the endoplasmic reticulum membrane. It catalyses the reaction a long-chain fatty aldehyde + 2 NADPH + O2 + H(+) = a long-chain alkane + formate + 2 NADP(+) + H2O. Aldehyde decarbonylase involved in the conversion of aldehydes to alkanes. Core component of a very-long-chain alkane synthesis complex. The chain is Very-long-chain aldehyde decarbonylase GL1-6 from Oryza sativa subsp. japonica (Rice).